The chain runs to 313 residues: MEKRLLDYEVGETVELFLLIKSSVKGTASNGKPFLSLVLQDKSGELEAKLWDVKESDEINYGVQQIVHLMGDIQNYRGRKQLKIRQIRQASPLDGVSASEFMETAPINKDEMADEITQYIFEMKNANLQRITRALLKKYQDDFYDYPAAMRHHHEFVSGLSFHVVSMLRLAKSVADLYPTVNRDLLYAGVILHDLGKVIELSGPVSTTYTLEGNLIGHISIVVEEVSKIAEELSIDGEEVVVLKHVLLSHHGKGEWGSPKPPLVREAEILHQIDLMDASLNMMDKVLKHTKPGEFSERVFGLDNRSFYNPTFE.

Positions 22-90 (SSVKGTASNG…QLKIRQIRQA (69 aa)) form a DNA-binding region, OB. In terms of domain architecture, HD spans 163 to 279 (HVVSMLRLAK…LHQIDLMDAS (117 aa)).

Belongs to the YhaM family.

Functionally, shows a 3'-5' exoribonuclease activity. This chain is 3'-5' exoribonuclease YhaM, found in Listeria innocua serovar 6a (strain ATCC BAA-680 / CLIP 11262).